The sequence spans 159 residues: Serine-protein kinase RsbW (159 aa).

It belongs to the anti-sigma-factor family.

The catalysed reaction is L-seryl-[protein] + ATP = O-phospho-L-seryl-[protein] + ADP + H(+). It carries out the reaction L-threonyl-[protein] + ATP = O-phospho-L-threonyl-[protein] + ADP + H(+). Functionally, negative regulator of sigma-B activity. Phosphorylates and inactivates its specific antagonist protein, RsbV. Upon phosphorylation of RsbV, RsbW is released and binds to sigma-B, thereby blocking its ability to form an RNA polymerase holoenzyme (E-sigma-B). This is Serine-protein kinase RsbW from Staphylococcus aureus (strain Newman).